An 88-amino-acid polypeptide reads, in one-letter code: Small ribosomal subunit protein bS20 (88 aa).

The protein belongs to the bacterial ribosomal protein bS20 family.

In terms of biological role, binds directly to 16S ribosomal RNA. In Rhodopseudomonas palustris (strain BisB18), this protein is Small ribosomal subunit protein bS20.